A 460-amino-acid polypeptide reads, in one-letter code: Probable lipase C14C8.15 (460 aa).

Over 1–16 (MTLNGNIMKYCLEKGE) the chain is Cytoplasmic. A helical; Signal-anchor for type II membrane protein membrane pass occupies residues 17-37 (ILISFLLIALESMFRICTVIL). Topologically, residues 38-460 (PSPLRNWFYE…LVDGVMNHTI (423 aa)) are lumenal. Catalysis depends on Ser214, which acts as the Nucleophile. Asn308 is a glycosylation site (N-linked (GlcNAc...) asparagine). Active-site charge relay system residues include Asp382 and His408. An N-linked (GlcNAc...) asparagine glycan is attached at Asn457.

It belongs to the AB hydrolase superfamily. Lipase family.

It localises to the golgi apparatus. Its subcellular location is the membrane. In terms of biological role, probable lipase. In Schizosaccharomyces pombe (strain 972 / ATCC 24843) (Fission yeast), this protein is Probable lipase C14C8.15.